A 445-amino-acid polypeptide reads, in one-letter code: GRAM domain-containing protein 2B (445 aa).

M1 is subject to N-acetylmethionine. The segment covering 1–10 (MVKKPISSSD) has biased composition (polar residues). A disordered region spans residues 1–119 (MVKKPISSSD…RKKSSSSSQY (119 aa)). Residues 18-37 (PSSPKSSAGASHSSTDSPSS) show a composition bias toward low complexity. Composition is skewed to polar residues over residues 56-68 (KSPT…SSVE) and 82-93 (SKSSFDGSNLLS). Positions 94-112 (DKNDCKTESKADSKTERKK) are enriched in basic and acidic residues. The 68-residue stretch at 123–190 (MHFHKLFLDV…FSVTLIKKTK (68 aa)) folds into the GRAM domain. Residues S238, S255, and S265 each carry the phosphoserine modification. The interval 277 to 331 (DLEGYSSSGSQTPESENSRDFHVTESQTVLNVTKGETKPPRTDAHGSRAPDGKAK) is disordered. The segment covering 281–291 (YSSSGSQTPES) has biased composition (polar residues). Positions 311 to 330 (GETKPPRTDAHGSRAPDGKA) are enriched in basic and acidic residues.

The chain is GRAM domain-containing protein 2B (Gramd2b) from Rattus norvegicus (Rat).